We begin with the raw amino-acid sequence, 181 residues long: Adenylate kinase (181 aa).

10–15 (GAGKGT) contacts ATP. Positions 30–59 (STGDLFRANIGEGTPLGKEAKSYIDAGKLV) are NMP. Residues T31, R36, 57–59 (KLV), 85–88 (GFPR), and Q92 each bind AMP. The tract at residues 126–132 (ARGRADD) is LID. ATP is bound at residue R127. AMP-binding residues include R129 and R140. ATP is bound at residue G166.

The protein belongs to the adenylate kinase family. As to quaternary structure, monomer.

The protein localises to the cytoplasm. It catalyses the reaction AMP + ATP = 2 ADP. The protein operates within purine metabolism; AMP biosynthesis via salvage pathway; AMP from ADP: step 1/1. Functionally, catalyzes the reversible transfer of the terminal phosphate group between ATP and AMP. Plays an important role in cellular energy homeostasis and in adenine nucleotide metabolism. The chain is Adenylate kinase from Corynebacterium diphtheriae (strain ATCC 700971 / NCTC 13129 / Biotype gravis).